A 451-amino-acid polypeptide reads, in one-letter code: Type 3 secretion system ATPase (451 aa).

184–189 (GGGKST) serves as a coordination point for ATP.

This sequence belongs to the ATPase alpha/beta chains family. T3SS ATPase subfamily. The core secretion machinery of the T3SS is composed of approximately 20 different proteins, including cytoplasmic components, a base, an export apparatus and a needle. This subunit is part of the cytosolic complex. Forms homohexamers.

Its subcellular location is the cytoplasm. The catalysed reaction is ATP + H2O + cellular proteinSide 1 = ADP + phosphate + cellular proteinSide 2.. Its function is as follows. ATPase component of the type III secretion system (T3SS), also called injectisome, which is used to inject bacterial effector proteins into eukaryotic host cells. Acts as a molecular motor to provide the energy that is required for the export of proteins. Required for type III secretion apparatus (T3SA) formation, proper protein secretion, host cell invasion and virulence. May play a critical role in T3SS substrate recognition, disassembly of the effector/chaperone complex and unfolding of the effector in an ATP-dependent manner prior to secretion. The polypeptide is Type 3 secretion system ATPase (Sinorhizobium fredii (strain NBRC 101917 / NGR234)).